The following is a 353-amino-acid chain: Mitochondrial import inner membrane translocase subunit TIM50 (353 aa).

Residues 1–44 (MAASAAVFSRLRSGLRLGSRGLCTRLATPPRRAPDQAAEIGSRG) constitute a mitochondrion transit peptide. Positions 25–60 (RLATPPRRAPDQAAEIGSRGSTKAQGPQQQPGSEGP) are disordered. Phosphoserine is present on Ser-45. Residues 45–65 (STKAQGPQQQPGSEGPSYAKK) lie on the Mitochondrial matrix side of the membrane. Residues 49-60 (QGPQQQPGSEGP) show a composition bias toward low complexity. Residues 66-86 (VALWLAGLLGAGGTVSVVYIF) form a helical membrane-spanning segment. Residues 87 to 353 (GNNPVDENGA…SRLWPRSKQP (267 aa)) are Mitochondrial intermembrane-facing. Positions 143–286 (YYQPPYTLVL…LDLSAFLKTI (144 aa)) constitute an FCP1 homology domain. Residue Ser-341 is modified to Phosphoserine.

Belongs to the TIM50 family. As to quaternary structure, component of the TIM23 complex at least composed of TIMM23, TIMM17 (TIMM17A or TIMM17B) and TIMM50; within this complex, directly interacts with TIMM23. The complex interacts with the TIMM44 component of the PAM complex and with DNAJC15. In terms of assembly, interacts with COIL and snRNPs. As to expression, widely expressed. Expressed at higher level in brain, kidney and liver (at protein level).

It localises to the mitochondrion inner membrane. The protein localises to the nucleus speckle. Functionally, essential component of the TIM23 complex, a complex that mediates the translocation of transit peptide-containing proteins across the mitochondrial inner membrane. Has some phosphatase activity in vitro; however such activity may not be relevant in vivo. May participate in the release of snRNPs and SMN from the Cajal body. In Homo sapiens (Human), this protein is Mitochondrial import inner membrane translocase subunit TIM50 (TIMM50).